Consider the following 736-residue polypeptide: uncharacterized protein (736 aa).

2 consecutive ABC transporter domains span residues 183-459 (IKID…KQME) and 518-734 (LQMS…TMTI). ATP contacts are provided by residues 215 to 222 (GRNGIGKS) and 551 to 558 (GPNGAGKS).

Belongs to the ABC transporter superfamily.

The protein resides in the cytoplasm. This is an uncharacterized protein from Schizosaccharomyces pombe (strain 972 / ATCC 24843) (Fission yeast).